Reading from the N-terminus, the 355-residue chain is Polyferredoxin protein FwdF (355 aa).

4Fe-4S ferredoxin-type domains follow at residues 24–53 (RELC…MGPL), 64–93 (PKLD…LKIN), 108–137 (RDIK…VERE), 147–176 (GEIN…LKYN), 187–216 (TDIE…VICY), 235–264 (GKTV…VEKP), 267–296 (GELI…FPKP), and 304–333 (PRII…VKRT). [4Fe-4S] cluster-binding residues include C33, C36, C39, C43, C73, C76, C79, C83, C117, C120, C123, C127, C156, C159, C162, C166, C196, C199, C202, C206, C244, C247, C250, C254, C276, C279, C282, C286, C313, C316, C319, and C323.

The cofactor is [4Fe-4S] cluster.

In Methanocaldococcus jannaschii (strain ATCC 43067 / DSM 2661 / JAL-1 / JCM 10045 / NBRC 100440) (Methanococcus jannaschii), this protein is Polyferredoxin protein FwdF (fwdF).